Consider the following 405-residue polypeptide: MAAALQTNIRTVKVPATFRAVSKQSLAPFRVRCAVASPGKKRYTITLLPGDGIGPEVVSIAKNVLQQAGSLEGVEFNFREMPIGGAALDLVGVPLPEETISAAKESDAVLLGAIGGYKWDNNEKHLRPEKGLLQIRAALKVFANLRPATVLPQLVDASTLKREVAEGVDLMVVRELTGGIYFGEPRGIKTNENGEEVGFNTEVYAAHEIDRIARVAFETARKRRGKLCSVDKANVLEASILWRKRVTALASEYPDVELSHMYVDNAAMQLVRDPKQFDTIVTNNIFGDILSDEASMITGSIGMLPSASLSDSGPGLFEPIHGSAPDIAGQDKANPLATILSAAMLLKYGLGEEKAAKRIEDAVLVALNNGFRTGDIYSAGTKLVGCKEMGEEVLKSVDSQVPASV.

Residues Met1–Cys33 constitute a chloroplast transit peptide. Phosphoserine is present on Ser70. Ile114–Glu129 is an NAD(+) binding site. The substrate site is built by Arg136, Arg146, and Arg174. Asn234 contacts NAD(+). Asp264 lines the substrate pocket. Asp264 is a binding site for Mg(2+). Residue Asn265 coordinates NAD(+). Residues Asp288 and Asp292 each coordinate Mg(2+). Glu318–Asn334 contacts NAD(+).

Belongs to the isocitrate and isopropylmalate dehydrogenases family. In terms of assembly, homodimer. Mg(2+) serves as cofactor. Requires Mn(2+) as cofactor. In terms of tissue distribution, expressed at low levels in seedlings, cotyledons, hypocotyls, flowers, roots, pollen, leaves and stems.

It is found in the plastid. Its subcellular location is the chloroplast stroma. The catalysed reaction is (2R,3S)-3-isopropylmalate + NAD(+) = 4-methyl-2-oxopentanoate + CO2 + NADH. It functions in the pathway amino-acid biosynthesis; L-leucine biosynthesis; L-leucine from 3-methyl-2-oxobutanoate: step 3/4. With respect to regulation, regulated by a thiol-based redox modification. Functionally, involved in leucine biosynthesis; catalyzes the oxidative decarboxylation step in leucine biosynthesis (primary metabolism). Catalyzes the oxidation of 3-carboxy-2-hydroxy-4-methylpentanoate (3-isopropylmalate, 3-IPM) to 3-carboxy-4-methyl-2-oxopentanoate. The product decarboxylates to 4-methyl-2 oxopentanoate. Required during pollen development and involved in embryo sac development. This is 3-isopropylmalate dehydrogenase 2, chloroplastic from Arabidopsis thaliana (Mouse-ear cress).